Here is a 277-residue protein sequence, read N- to C-terminus: MEMO1 family protein CTN_0605 (277 aa).

This sequence belongs to the MEMO1 family.

This Thermotoga neapolitana (strain ATCC 49049 / DSM 4359 / NBRC 107923 / NS-E) protein is MEMO1 family protein CTN_0605.